The chain runs to 107 residues: Small ribosomal subunit protein uS17 (107 aa).

This sequence belongs to the universal ribosomal protein uS17 family. Part of the 30S ribosomal subunit.

Functionally, one of the primary rRNA binding proteins, it binds specifically to the 5'-end of 16S ribosomal RNA. In Thermotoga maritima (strain ATCC 43589 / DSM 3109 / JCM 10099 / NBRC 100826 / MSB8), this protein is Small ribosomal subunit protein uS17.